A 138-amino-acid polypeptide reads, in one-letter code: MRLTQGTFSFLPDLTDAQIQKQVQYAVSKKWAVSVEYTDDPHPRNSFWELWGLPLFDVKDASALMYEIAACRKAKPNYYIKVNAFDNTRGVESCCLSFIINRPINEPGFHLERQEVQGRNILYTIKSYAVNKPEGSRY.

It belongs to the RuBisCO small chain family. As to quaternary structure, heterohexadecamer of 8 large and 8 small subunits.

It localises to the plastid. The protein localises to the chloroplast. Its function is as follows. RuBisCO catalyzes two reactions: the carboxylation of D-ribulose 1,5-bisphosphate, the primary event in carbon dioxide fixation, as well as the oxidative fragmentation of the pentose substrate in the photorespiration process. Both reactions occur simultaneously and in competition at the same active site. Although the small subunit is not catalytic it is essential for maximal activity. The polypeptide is Ribulose bisphosphate carboxylase small subunit (Porphyridium aerugineum (Red microalga)).